The following is a 185-amino-acid chain: Ribosome-recycling factor (185 aa).

This sequence belongs to the RRF family.

The protein localises to the cytoplasm. In terms of biological role, responsible for the release of ribosomes from messenger RNA at the termination of protein biosynthesis. May increase the efficiency of translation by recycling ribosomes from one round of translation to another. The chain is Ribosome-recycling factor from Novosphingobium aromaticivorans (strain ATCC 700278 / DSM 12444 / CCUG 56034 / CIP 105152 / NBRC 16084 / F199).